Here is an 89-residue protein sequence, read N- to C-terminus: Small ribosomal subunit protein uS15 (89 aa).

The segment covering Met-1 to Asp-21 has biased composition (basic and acidic residues). Residues Met-1 to Ser-24 form a disordered region.

It belongs to the universal ribosomal protein uS15 family. In terms of assembly, part of the 30S ribosomal subunit. Forms a bridge to the 50S subunit in the 70S ribosome, contacting the 23S rRNA.

Its function is as follows. One of the primary rRNA binding proteins, it binds directly to 16S rRNA where it helps nucleate assembly of the platform of the 30S subunit by binding and bridging several RNA helices of the 16S rRNA. In terms of biological role, forms an intersubunit bridge (bridge B4) with the 23S rRNA of the 50S subunit in the ribosome. The protein is Small ribosomal subunit protein uS15 of Rhodococcus jostii (strain RHA1).